Here is a 40-residue protein sequence, read N- to C-terminus: Subtilisin-like serine protease AS-E1 (40 aa).

A Peptidase S8 domain is found at 4–40 (PWGLARISHRTTGATSYVYDDSAGEGTCSYIIDTGIY). The active-site Charge relay system is the Asp-36.

This sequence belongs to the peptidase S8 family. In terms of assembly, homodimer.

Strongly inhibited by antipain and PMSF. Inhibited by benzamidine and aprotinin by 80% and 17% respectively. Little or no inhibition by EDTA, E-64, iodoacetic acid, leupeptin and FUT-175. Functionally, subtilisin-like serine protease. Cleaves prothrombin at 155-Arg-|-Ser-156, 45-Thr-|-Ala-46 and 316-Tyr-|-Ile-317 to produce meizothrombin(desF1)-like molecules. Degrades fibrinogen. Inhibits plasma coagulation. This Acremonium sp protein is Subtilisin-like serine protease AS-E1.